The primary structure comprises 181 residues: Ribosome-recycling factor (181 aa).

Positions 135-160 (MDDIKKDKDMPEDDARKAEDQTQKLT) are disordered.

This sequence belongs to the RRF family.

It localises to the cytoplasm. Functionally, responsible for the release of ribosomes from messenger RNA at the termination of protein biosynthesis. May increase the efficiency of translation by recycling ribosomes from one round of translation to another. In Leuconostoc mesenteroides subsp. mesenteroides (strain ATCC 8293 / DSM 20343 / BCRC 11652 / CCM 1803 / JCM 6124 / NCDO 523 / NBRC 100496 / NCIMB 8023 / NCTC 12954 / NRRL B-1118 / 37Y), this protein is Ribosome-recycling factor.